A 309-amino-acid polypeptide reads, in one-letter code: Isopentenyl-diphosphate Delta-isomerase II (309 aa).

Lys-112 provides a ligand contact to substrate. Positions 116 and 128 each coordinate Mg(2+). In terms of domain architecture, Nudix hydrolase spans 126-278; it reads LLHRAFSVFL…GLKLSPWFRL (153 aa). Positions 147 and 151 each coordinate substrate. Cys-163 is an active-site residue. Residue Ser-164 coordinates substrate. Mg(2+) contacts are provided by Glu-223 and Glu-225. The active site involves Glu-225.

This sequence belongs to the IPP isomerase type 1 family. It depends on Mg(2+) as a cofactor.

The catalysed reaction is isopentenyl diphosphate = dimethylallyl diphosphate. Its pathway is isoprenoid biosynthesis; dimethylallyl diphosphate biosynthesis; dimethylallyl diphosphate from isopentenyl diphosphate: step 1/1. The protein operates within porphyrin-containing compound metabolism; chlorophyll biosynthesis. Catalyzes the 1,3-allylic rearrangement of the homoallylic substrate isopentenyl (IPP) to its highly electrophilic allylic isomer, dimethylallyl diphosphate (DMAPP). This is Isopentenyl-diphosphate Delta-isomerase II (IPI2) from Camptotheca acuminata (Happy tree).